The chain runs to 643 residues: Chromosomal replication initiator protein DnaA (643 aa).

The segment at 1–97 (MADVPADLAA…VDDSAGEPPP (97 aa)) is domain I, interacts with DnaA modulators. Residues 87 to 303 (TVDDSAGEPP…ASGPGEPTAR (217 aa)) form a disordered region. The domain II stretch occupies residues 97-302 (PAAPPAQQTP…PASGPGEPTA (206 aa)). Over residues 195 to 209 (SPSSQDAYGSPSQDY) the composition is skewed to polar residues. Basic and acidic residues predominate over residues 222–269 (QRGDYDTPRAEYEPARPDYDSARPDYESARPEYDQRDPVRRELPEPPA). Residues 291-300 (PAPASGPGEP) show a composition bias toward low complexity. The segment at 303 to 519 (RLNPKYLFDT…GALIRVTAFA (217 aa)) is domain III, AAA+ region. Residues G347, G349, K350, and T351 each contribute to the ATP site. The domain IV, binds dsDNA stretch occupies residues 520 to 643 (SLNRQPVDLG…TELTNRIKNG (124 aa)).

This sequence belongs to the DnaA family. Oligomerizes as a right-handed, spiral filament on DNA at oriC.

Its subcellular location is the cytoplasm. In terms of biological role, plays an essential role in the initiation and regulation of chromosomal replication. ATP-DnaA binds to the origin of replication (oriC) to initiate formation of the DNA replication initiation complex once per cell cycle. Binds the DnaA box (a 9 base pair repeat at the origin) and separates the double-stranded (ds)DNA. Forms a right-handed helical filament on oriC DNA; dsDNA binds to the exterior of the filament while single-stranded (ss)DNA is stabiized in the filament's interior. The ATP-DnaA-oriC complex binds and stabilizes one strand of the AT-rich DNA unwinding element (DUE), permitting loading of DNA polymerase. After initiation quickly degrades to an ADP-DnaA complex that is not apt for DNA replication. Binds acidic phospholipids. The protein is Chromosomal replication initiator protein DnaA of Streptomyces reticuli.